The sequence spans 93 residues: Large ribosomal subunit protein uL23cz/uL23cy (93 aa).

It belongs to the universal ribosomal protein uL23 family. Part of the 50S ribosomal subunit.

It localises to the plastid. It is found in the chloroplast. Functionally, binds to 23S rRNA. The sequence is that of Large ribosomal subunit protein uL23cz/uL23cy (rpl23-A) from Citrus sinensis (Sweet orange).